Here is a 289-residue protein sequence, read N- to C-terminus: 3-methyl-2-oxobutanoate hydroxymethyltransferase (289 aa).

Residues 1–15 (MSTTFKLDTSTSRAN) are compositionally biased toward polar residues. The tract at residues 1 to 21 (MSTTFKLDTSTSRANPTPAPM) is disordered. Residues aspartate 67 and aspartate 106 each coordinate Mg(2+). 3-methyl-2-oxobutanoate is bound by residues 67-68 (DS), aspartate 106, and lysine 136. Mg(2+) is bound at residue glutamate 138. Glutamate 205 (proton acceptor) is an active-site residue.

Belongs to the PanB family. As to quaternary structure, homodecamer; pentamer of dimers. Requires Mg(2+) as cofactor.

It is found in the cytoplasm. It catalyses the reaction 3-methyl-2-oxobutanoate + (6R)-5,10-methylene-5,6,7,8-tetrahydrofolate + H2O = 2-dehydropantoate + (6S)-5,6,7,8-tetrahydrofolate. Its pathway is cofactor biosynthesis; (R)-pantothenate biosynthesis; (R)-pantoate from 3-methyl-2-oxobutanoate: step 1/2. In terms of biological role, catalyzes the reversible reaction in which hydroxymethyl group from 5,10-methylenetetrahydrofolate is transferred onto alpha-ketoisovalerate to form ketopantoate. In Erythrobacter litoralis (strain HTCC2594), this protein is 3-methyl-2-oxobutanoate hydroxymethyltransferase.